The following is a 68-amino-acid chain: Neuronal regeneration-related protein (68 aa).

Residues Glu22–Ser54 form a disordered region. Positions Thr44–Ser54 are enriched in polar residues. A Phosphoserine modification is found at Ser59.

As to quaternary structure, interacts with the latency-associated peptides (LAP) of TGFB1 and TGFB2; the interaction results in a decrease in TGFB autoinduction. Interacts with FLNA. Post-translationally, phosphorylated on Ser-59. Phosphorylation decreases stability and activity. Expressed in lung (at protein level).

Its subcellular location is the cytoplasm. May have roles in neural function. Ectopic expression augments motility of gliomas. Also promotes axonal regeneration. May also have functions in cellular differentiation. Induces differentiation of fibroblast into myofibroblast and myofibroblast ameboid migration. Increases retinoic-acid regulation of lipid-droplet biogenesis. Down-regulates the expression of TGFB1 and TGFB2 but not of TGFB3. May play a role in the regulation of alveolar generation. This is Neuronal regeneration-related protein (NREP) from Homo sapiens (Human).